The sequence spans 78 residues: Translation initiation factor IF-1, chloroplastic (78 aa).

Positions 1-72 (MEKQNLIDME…TKGRITYRLR (72 aa)) constitute an S1-like domain.

It belongs to the IF-1 family. As to quaternary structure, component of the 30S ribosomal translation pre-initiation complex which assembles on the 30S ribosome in the order IF-2 and IF-3, IF-1 and N-formylmethionyl-tRNA(fMet); mRNA recruitment can occur at any time during PIC assembly.

It localises to the plastid. It is found in the chloroplast. Functionally, one of the essential components for the initiation of protein synthesis. Stabilizes the binding of IF-2 and IF-3 on the 30S subunit to which N-formylmethionyl-tRNA(fMet) subsequently binds. Helps modulate mRNA selection, yielding the 30S pre-initiation complex (PIC). Upon addition of the 50S ribosomal subunit IF-1, IF-2 and IF-3 are released leaving the mature 70S translation initiation complex. This Anthoceros angustus (Hornwort) protein is Translation initiation factor IF-1, chloroplastic.